We begin with the raw amino-acid sequence, 86 residues long: U13-theraphotoxin-Cg1b (86 aa).

An N-terminal signal peptide occupies residues 1–21; the sequence is MKVSVLITLAVLGVMFVWASA. The propeptide occupies 22 to 51; the sequence is AELEQSGSDQKDSPAWLKSMERIFQSEERE. 3 disulfides stabilise this stretch: Cys52–Cys66, Cys59–Cys71, and Cys65–Cys78.

This sequence belongs to the neurotoxin 10 (Hwtx-1) family. 41 (Jztx-36) subfamily. In terms of tissue distribution, expressed by the venom gland.

The protein resides in the secreted. Probable ion channel inhibitor. This is U13-theraphotoxin-Cg1b from Chilobrachys guangxiensis (Chinese earth tiger tarantula).